We begin with the raw amino-acid sequence, 563 residues long: Tripeptidyl-peptidase 1 (563 aa).

Residues Met-1 to Cys-19 form the signal peptide. Positions Ser-20–Gly-195 are cleaved as a propeptide — removed in mature form. Cys-111 and Cys-122 are disulfide-bonded. The Peptidase S53 domain maps to Gly-199–Pro-563. Residues Asn-210 and Asn-222 are each glycosylated (N-linked (GlcNAc...) asparagine). Residues Glu-272 and Asp-276 each act as charge relay system in the active site. N-linked (GlcNAc...) asparagine glycans are attached at residues Asn-286, Asn-313, and Asn-443. 2 cysteine pairs are disulfide-bonded: Cys-365-Cys-526 and Cys-522-Cys-537. Ser-475 functions as the Charge relay system in the catalytic mechanism. Asp-517 and Val-518 together coordinate Ca(2+). The Ca(2+) site is built by Gly-539, Gly-541, and Asp-543.

As to quaternary structure, monomer. Interacts with CLN5. Interacts with CLN3. It depends on Ca(2+) as a cofactor. In terms of processing, activated by autocatalytic proteolytical processing upon acidification. N-glycosylation is required for processing and activity.

The protein resides in the lysosome. The protein localises to the melanosome. It catalyses the reaction Release of an N-terminal tripeptide from a polypeptide, but also has endopeptidase activity.. Its function is as follows. Lysosomal serine protease with tripeptidyl-peptidase I activity. May act as a non-specific lysosomal peptidase which generates tripeptides from the breakdown products produced by lysosomal proteinases. Requires substrates with an unsubstituted N-terminus. The chain is Tripeptidyl-peptidase 1 (TPP1) from Pan troglodytes (Chimpanzee).